The sequence spans 38 residues: Photosystem I reaction center subunit IX (38 aa).

Residues 4-24 (FLTAAPVVAAIWFTATAGILI) traverse the membrane as a helical segment.

This sequence belongs to the PsaJ family.

The protein localises to the cellular thylakoid membrane. Its function is as follows. May help in the organization of the PsaE and PsaF subunits. The chain is Photosystem I reaction center subunit IX from Synechococcus sp. (strain CC9605).